A 151-amino-acid polypeptide reads, in one-letter code: UPF0178 protein Hhal_1913 (151 aa).

This sequence belongs to the UPF0178 family.

This Halorhodospira halophila (strain DSM 244 / SL1) (Ectothiorhodospira halophila (strain DSM 244 / SL1)) protein is UPF0178 protein Hhal_1913.